A 955-amino-acid chain; its full sequence is UPF0182 protein PMT_0755 (955 aa).

9 helical membrane passes run 25–45 (LLLSIAAFCLLMRVQVEWLWF), 58–78 (WLWQLGGLLLALLVVATCQLW), 107–127 (LLGCFVVVVGDLVLLSRLAWL), 146–166 (IWALVIPLSCVFISICVMLGN), 178–198 (CFCFSISIARGWGLWALALAI), 214–234 (FGLGQFPALAFALVVLLAQLI), 264–284 (CNFLRPLIGIILLTLSALLWL), 313–333 (SLASLAILVFAFLVIPFTWIQ), and 340–360 (LIASIIGVGAILLEVLLAPFV).

This sequence belongs to the UPF0182 family.

The protein resides in the cell membrane. The sequence is that of UPF0182 protein PMT_0755 from Prochlorococcus marinus (strain MIT 9313).